A 191-amino-acid polypeptide reads, in one-letter code: Protein Ves (191 aa).

It belongs to the Ves family.

This is Protein Ves from Escherichia coli (strain K12 / MC4100 / BW2952).